A 188-amino-acid chain; its full sequence is RxLR effector protein Avh241 (188 aa).

An N-terminal signal peptide occupies residues 1-16 (MRQYCLLLIVLALAAA). A RxLR-dEER motif is present at residues 43-58 (RLLRSEPQDEDTFEDR). A Host plasma membrane localization motif motif is present at residues 73–78 (GAAKAK).

The protein belongs to the RxLR effector family.

The protein localises to the secreted. Its subcellular location is the host cell membrane. Its function is as follows. Effector that triggers cell death in a variety of plant species (including tobacco, tomato and soybean), regardless of the Rps genes present. Avh241 interacts with the plant immune system via at least two different mechanisms, one recognized by plants dependent on subcellular localization and one promoting infection independent on membrane localization. The cell death triggered by Avh241 in N.benthamiana requires the two host mitogen-activated protein kinases, MEK2 and WIPK. This Phytophthora sojae (strain P6497) (Soybean stem and root rot agent) protein is RxLR effector protein Avh241.